The sequence spans 502 residues: CBL-interacting protein kinase 11 (502 aa).

The Protein kinase domain occupies 12-267; sequence YEVGKQLGQG…IPRIKRSTWY (256 aa). ATP is bound by residues 18 to 26 and Lys41; that span reads LGQGTFAKV. Asp135 serves as the catalytic Proton acceptor. The segment at 153–182 is activation loop; the sequence is DFGLSALAESKRQDGLLHTTCGTPAYVAPE. The 37-residue stretch at 297-333 folds into the NAF domain; the sequence is AECSTSEENQGSLSLPNLNAFDIISLSTGFNLSGFFE. Positions 339 to 367 are PPI; it reads QEERFTTRQPVTTVLGKLKELAKRLKLKV. The tract at residues 447–502 is disordered; that stretch reads LQGEQQQSPLPPELPQDQLQPSLPQQEKQDMPEPPLLPQVPQEEVQTSIPAEQTKN. Residues 461-472 are compositionally biased toward low complexity; it reads PQDQLQPSLPQQ. Positions 493 to 502 are enriched in polar residues; it reads TSIPAEQTKN.

It belongs to the protein kinase superfamily. CAMK Ser/Thr protein kinase family. SNF1 subfamily. It depends on Mn(2+) as a cofactor.

It carries out the reaction L-seryl-[protein] + ATP = O-phospho-L-seryl-[protein] + ADP + H(+). It catalyses the reaction L-threonyl-[protein] + ATP = O-phospho-L-threonyl-[protein] + ADP + H(+). Functionally, CIPK serine-threonine protein kinases interact with CBL proteins. Binding of a CBL protein to the regulatory NAF domain of CIPK protein lead to the activation of the kinase in a calcium-dependent manner. The protein is CBL-interacting protein kinase 11 (CIPK11) of Oryza sativa subsp. japonica (Rice).